Consider the following 266-residue polypeptide: UPF0294 protein YafD (266 aa).

This sequence belongs to the UPF0294 family.

Its subcellular location is the cytoplasm. The sequence is that of UPF0294 protein YafD from Salmonella newport (strain SL254).